The chain runs to 500 residues: Carnosic acid synthase (500 aa).

The helical transmembrane segment at 4-24 (LILLSLAFLASCVVAYSRRRP) threads the bilayer. Cysteine 443 is a heme binding site.

Belongs to the cytochrome P450 family. Requires heme as cofactor. As to expression, mostly expressed in young leaves, particularly in glandular trichomes.

The protein resides in the membrane. It catalyses the reaction 11-hydroxyferruginol + 3 reduced [NADPH--hemoprotein reductase] + 3 O2 = carnosate + 3 oxidized [NADPH--hemoprotein reductase] + 4 H2O + 4 H(+). The enzyme catalyses miltiradiene + 2 reduced [NADPH--hemoprotein reductase] + 2 O2 = miltiradien-20-al + 2 oxidized [NADPH--hemoprotein reductase] + 3 H2O + 2 H(+). The catalysed reaction is ferruginol + 3 reduced [NADPH--hemoprotein reductase] + 3 O2 = pisiferate + 3 oxidized [NADPH--hemoprotein reductase] + 4 H2O + 4 H(+). The protein operates within secondary metabolite biosynthesis; terpenoid biosynthesis. Monooxygenase involved in the biosynthesis of carnosate, a potent antioxidant labdane-related diterpene natural product. Catalyzes the oxidation of 11-hydroxyferruginol to produce carnosate. Mediates the conversion of miltiradien into miltiradien-20-al. Also involved in the production of pisiferic acid and derivative products from ferruginol. The sequence is that of Carnosic acid synthase from Salvia fruticosa (Greek sage).